We begin with the raw amino-acid sequence, 232 residues long: Large ribosomal subunit protein uL1 (232 aa).

Belongs to the universal ribosomal protein uL1 family. Part of the 50S ribosomal subunit.

Binds directly to 23S rRNA. The L1 stalk is quite mobile in the ribosome, and is involved in E site tRNA release. Its function is as follows. Protein L1 is also a translational repressor protein, it controls the translation of the L11 operon by binding to its mRNA. The chain is Large ribosomal subunit protein uL1 from Burkholderia multivorans (strain ATCC 17616 / 249).